We begin with the raw amino-acid sequence, 339 residues long: Protein FAM131B (339 aa).

The segment at 1–22 (MDSTSSLHGSSLHRPSTEQTRT) is disordered. Phosphoserine is present on residues Ser47, Ser114, and Ser117. The tract at residues 222–339 (GPAFGDSQPS…PLLTQPSTPA (118 aa)) is disordered. Composition is skewed to polar residues over residues 239-250 (QPASGYSAQEPS) and 324-339 (PTTSFLPLLTQPSTPA). Thr325 carries the post-translational modification Phosphothreonine. At Ser327 the chain carries Phosphoserine.

This sequence belongs to the FAM131 family.

The chain is Protein FAM131B (FAM131B) from Bos taurus (Bovine).